The chain runs to 478 residues: tRNA (adenine(58)-N(1))-methyltransferase non-catalytic subunit TRM6 (478 aa).

Residues 456 to 478 form a disordered region; the sequence is SENATAADSSEKLAEHGAKKQKI. Basic and acidic residues predominate over residues 464-478; sequence SSEKLAEHGAKKQKI.

It belongs to the TRM6/GCD10 family. As to quaternary structure, heterotetramer; composed of two copies of TRM6/GCD10 and two copies of TRM61/GCD14.

It localises to the nucleus. Substrate-binding subunit of tRNA (adenine-N(1)-)-methyltransferase, which catalyzes the formation of N(1)-methyladenine at position 58 (m1A58) in initiator methionyl-tRNA. Also required for repression of GCN4 mRNA translation by the upstream open reading frames (uORFs) under conditions of amino acid sufficiency. This is tRNA (adenine(58)-N(1))-methyltransferase non-catalytic subunit TRM6 (GCD10) from Saccharomyces cerevisiae (strain ATCC 204508 / S288c) (Baker's yeast).